Reading from the N-terminus, the 340-residue chain is Diacylglycerol acyltransferase/mycolyltransferase Ag85C (340 aa).

Positions 1–45 (MTFFEQVRRLRSAATTLPRRLAIAAMGAVLVYGLVGTFGGPATAG) are cleaved as a signal peptide. 86–87 (LR) contacts substrate. The tract at residues 102–112 (FEEYYQSGLSV) is fibronectin-binding. Substrate contacts are provided by serine 170 and asparagine 198. Serine 170 functions as the Nucleophile in the catalytic mechanism. The active site involves glutamate 274. Substrate is bound by residues 276–279 (LTLR) and 306–308 (HSW). Residue histidine 306 is part of the active site.

It belongs to the mycobacterial A85 antigen family. As to quaternary structure, homodimer.

It localises to the secreted. The enzyme catalyses an acyl-CoA + a 1,2-diacyl-sn-glycerol = a triacyl-sn-glycerol + CoA. It catalyses the reaction 2 alpha,alpha'-trehalose 6-mycolate = alpha,alpha'-trehalose 6,6'-bismycolate + alpha,alpha-trehalose. The antigen 85 proteins (FbpA, FbpB, FbpC) are responsible for the high affinity of mycobacteria to fibronectin, a large adhesive glycoprotein, which facilitates the attachment of M.tuberculosis to murine alveolar macrophages (AMs). They also help to maintain the integrity of the cell wall by catalyzing the transfer of mycolic acids to cell wall arabinogalactan and through the synthesis of alpha,alpha-trehalose dimycolate (TDM, cord factor). They catalyze the transfer of a mycoloyl residue from one molecule of alpha,alpha-trehalose monomycolate (TMM) to another TMM, leading to the formation of TDM. The protein is Diacylglycerol acyltransferase/mycolyltransferase Ag85C (fbpC) of Mycobacterium bovis (strain ATCC BAA-935 / AF2122/97).